The sequence spans 127 residues: Aspartate 1-decarboxylase (127 aa).

The active-site Schiff-base intermediate with substrate; via pyruvic acid is the serine 25. Position 25 is a pyruvic acid (Ser) (serine 25). Threonine 57 lines the substrate pocket. The Proton donor role is filled by tyrosine 58. Residue 73-75 participates in substrate binding; that stretch reads GAA.

Belongs to the PanD family. Heterooctamer of four alpha and four beta subunits. The cofactor is pyruvate. Is synthesized initially as an inactive proenzyme, which is activated by self-cleavage at a specific serine bond to produce a beta-subunit with a hydroxyl group at its C-terminus and an alpha-subunit with a pyruvoyl group at its N-terminus.

The protein localises to the cytoplasm. It carries out the reaction L-aspartate + H(+) = beta-alanine + CO2. Its pathway is cofactor biosynthesis; (R)-pantothenate biosynthesis; beta-alanine from L-aspartate: step 1/1. Catalyzes the pyruvoyl-dependent decarboxylation of aspartate to produce beta-alanine. The chain is Aspartate 1-decarboxylase from Bacillus cereus (strain B4264).